We begin with the raw amino-acid sequence, 239 residues long: MMRKMLLAAALSVTAMTAHADYQCSVTPRDDVIVSPQTVQVKGENGNLVITPDGNVMYNGKQYSLNAAQREQAKDYQAELRSTLPWIDEGAKSRVEKARIALDKIIVQEMGESSKMRSRLTKLDAQLKEQMNRIIETRSDGLTFHYKAIDQVRAEGQQLVNQAMGGILQDSINEMGAKAVLKSGGNPLQNVLGSLGGLQSSIQTEWKKQEKDFQQFGKDVCSRVVTLEDSRKALVGNLK.

This is an uncharacterized protein from Escherichia coli O157:H7.